A 316-amino-acid polypeptide reads, in one-letter code: MIKLGIVMDPIANINIKKDSSFAMLLEAQRRGYELHYMEMADLYLINGEARARTRTLSVEQNYDKWYEFTGEQDLPLADLDVILMRKDPPFDTEFIYATYILERAEEKGTLIVNKPQSLRDCNEKLFTAWFSDLTPETLVTRNKAQLKAFWEKHSDIILKPLDGMGGASIFRVKEGDPNLGVIAETLTEHGTRYCMAQNYLPAIKDGDKRVLVVDGEPVPYCLARIPQGGETRGNLAAGGRGEPRPLTESDWKIARQIGPTLKEKGLIFVGLDIIGDRLTEINVTSPTCIREIEAEFPVSITGMLMDAIEARLQQQ.

Residues 125 to 310 enclose the ATP-grasp domain; the sequence is KLFTAWFSDL…ITGMLMDAIE (186 aa). An N-beta-linked (GlcNAc) arginine glycan is attached at Arg-256. Mg(2+)-binding residues include Glu-281 and Asn-283.

The protein belongs to the prokaryotic GSH synthase family. Mg(2+) serves as cofactor. Mn(2+) is required as a cofactor.

The enzyme catalyses gamma-L-glutamyl-L-cysteine + glycine + ATP = glutathione + ADP + phosphate + H(+). It functions in the pathway sulfur metabolism; glutathione biosynthesis; glutathione from L-cysteine and L-glutamate: step 2/2. The chain is Glutathione synthetase from Escherichia coli O127:H6 (strain E2348/69 / EPEC).